The chain runs to 88 residues: Putative membrane protein insertion efficiency factor (88 aa).

The tract at residues 68–88 is disordered; sequence VPPPNSDTRARGEADARSHRL. Residues 75–88 are compositionally biased toward basic and acidic residues; that stretch reads TRARGEADARSHRL.

It belongs to the UPF0161 family.

The protein resides in the cell inner membrane. In terms of biological role, could be involved in insertion of integral membrane proteins into the membrane. The protein is Putative membrane protein insertion efficiency factor of Burkholderia orbicola (strain MC0-3).